A 962-amino-acid polypeptide reads, in one-letter code: Splicing regulator ARVCF (962 aa).

A coiled-coil region spans residues serine 8–glutamine 46. The disordered stretch occupies residues threonine 95–threonine 122. Threonine 102 and threonine 104 each carry phosphothreonine. The segment covering threonine 102–aspartate 114 has biased composition (polar residues). An Omega-N-methylarginine modification is found at arginine 170. Disordered regions lie at residues glycine 186 to arginine 253 and arginine 266 to proline 290. A compositionally biased stretch (low complexity) spans arginine 206–proline 217. Position 267 is a phosphoserine (serine 267). A compositionally biased stretch (acidic residues) spans alanine 270–proline 280. Serine 332, serine 335, serine 343, and serine 345 each carry phosphoserine. ARM repeat units follow at residues serine 348–phenylalanine 387, glutamate 390–tyrosine 429, threonine 433–threonine 467, leucine 468–serine 508, leucine 526–asparagine 565, and methionine 575–alanine 622. A disordered region spans residues aspartate 590–alanine 614. A Phosphoserine modification is found at serine 606. The Nuclear localization signal motif lies at glutamine 607–lysine 623. At threonine 642 the chain carries Phosphothreonine. 4 ARM repeats span residues proline 646–alanine 686, threonine 699–leucine 738, aspartate 739–asparagine 781, and threonine 782–leucine 826. Positions valine 776–valine 962 are required for interaction with RNA-binding proteins DDX5, HNRNPH2 and SRSF1 and with mRNAs. Positions alanine 854–valine 962 are disordered. Residues serine 864 and serine 871 each carry the phosphoserine modification. Threonine 872 carries the post-translational modification Phosphothreonine. Residues lysine 878–serine 887 show a composition bias toward basic and acidic residues. Residue serine 915 is modified to Phosphoserine. Residues alanine 920–arginine 932 are compositionally biased toward basic and acidic residues.

Belongs to the beta-catenin family. Component of a ribonucleoprotein complex containing mRNAs and RNA-binding proteins including DDX5, HNRNPH2 and SRSF1 as well as ARVCF. Interacts (via the extreme C-terminus) with FRMPD2 (via the PDZ 2 domain). Interacts with CCDC85B. In terms of tissue distribution, found in all the examined tissues including heart, brain, liver and kidney. Found at low level in lung. Expressed in dermal connective tissue, salivary gland duct and in the corneal layer (at protein level). Expressed in arrector pili muscle (at protein level). High levels detected in epithelial cells with lower levels found in fibroblasts and T lymphocytes.

Its subcellular location is the cell junction. It localises to the adherens junction. The protein resides in the nucleus. The protein localises to the cytoplasm. Contributes to the regulation of alternative splicing of pre-mRNAs. The polypeptide is Splicing regulator ARVCF (Homo sapiens (Human)).